A 309-amino-acid chain; its full sequence is UPF0276 protein RB0508 (309 aa).

Belongs to the UPF0276 family.

The chain is UPF0276 protein RB0508 from Rhizobium meliloti (strain 1021) (Ensifer meliloti).